We begin with the raw amino-acid sequence, 337 residues long: Formamidase (337 aa).

A CN hydrolase domain is found at 14–257 (VVIGLVQLQL…DEIITAEVRP (244 aa)). E60 (proton acceptor) is an active-site residue. The Proton donor role is filled by K129. The Nucleophile role is filled by C162.

Belongs to the carbon-nitrogen hydrolase superfamily. Aliphatic amidase family.

The catalysed reaction is formamide + H2O = formate + NH4(+). Its function is as follows. Is an aliphatic amidase with a restricted substrate specificity, as it only hydrolyzes formamide. This chain is Formamidase, found in Bradyrhizobium diazoefficiens (strain JCM 10833 / BCRC 13528 / IAM 13628 / NBRC 14792 / USDA 110).